The primary structure comprises 284 residues: Bifunctional protein FolD 2 (284 aa).

Residues 165-167, Thr-192, and Val-233 contribute to the NADP(+) site; that span reads GRG.

Belongs to the tetrahydrofolate dehydrogenase/cyclohydrolase family. As to quaternary structure, homodimer.

The catalysed reaction is (6R)-5,10-methylene-5,6,7,8-tetrahydrofolate + NADP(+) = (6R)-5,10-methenyltetrahydrofolate + NADPH. It catalyses the reaction (6R)-5,10-methenyltetrahydrofolate + H2O = (6R)-10-formyltetrahydrofolate + H(+). It functions in the pathway one-carbon metabolism; tetrahydrofolate interconversion. Catalyzes the oxidation of 5,10-methylenetetrahydrofolate to 5,10-methenyltetrahydrofolate and then the hydrolysis of 5,10-methenyltetrahydrofolate to 10-formyltetrahydrofolate. The polypeptide is Bifunctional protein FolD 2 (Streptomyces avermitilis (strain ATCC 31267 / DSM 46492 / JCM 5070 / NBRC 14893 / NCIMB 12804 / NRRL 8165 / MA-4680)).